The chain runs to 455 residues: Exodeoxyribonuclease 7 large subunit (455 aa).

The protein belongs to the XseA family. In terms of assembly, heterooligomer composed of large and small subunits.

The protein resides in the cytoplasm. It carries out the reaction Exonucleolytic cleavage in either 5'- to 3'- or 3'- to 5'-direction to yield nucleoside 5'-phosphates.. Bidirectionally degrades single-stranded DNA into large acid-insoluble oligonucleotides, which are then degraded further into small acid-soluble oligonucleotides. The chain is Exodeoxyribonuclease 7 large subunit from Escherichia coli (strain SMS-3-5 / SECEC).